Reading from the N-terminus, the 741-residue chain is Isocitrate dehydrogenase [NADP] (741 aa).

2 residues coordinate NADP(+): Asn-85 and Ser-87. D-threo-isocitrate contacts are provided by Ser-132, Asn-135, Arg-139, Arg-145, and Lys-255. An NADP(+)-binding site is contributed by Asn-135. Asp-350 contacts Mn(2+). Positions 420 and 547 each coordinate D-threo-isocitrate. A Mn(2+)-binding site is contributed by Asp-548. Residues Ser-585, His-589, Arg-600, Asp-602, and Arg-649 each contribute to the NADP(+) site.

The protein belongs to the monomeric-type IDH family. Monomer. Mg(2+) is required as a cofactor. Mn(2+) serves as cofactor.

The protein resides in the cytoplasm. The enzyme catalyses D-threo-isocitrate + NADP(+) = 2-oxoglutarate + CO2 + NADPH. Its activity is regulated as follows. Activity is inhibited in the presence of Ca(2+). Catalyzes the oxidative decarboxylation of isocitrate to 2-oxoglutarate and carbon dioxide with the concomitant reduction of NADP(+). In Azotobacter vinelandii, this protein is Isocitrate dehydrogenase [NADP].